Consider the following 366-residue polypeptide: Class I histocompatibility antigen, Gogo-C*0201 alpha chain (366 aa).

Residues methionine 1–alanine 24 form the signal peptide. Residues glycine 25 to aspartate 114 form an alpha-1 region. At glycine 25–isoleucine 308 the chain is on the extracellular side. Asparagine 110 carries N-linked (GlcNAc...) asparagine glycosylation. Positions glycine 115 to alanine 206 are alpha-2. 2 disulfide bridges follow: cysteine 125-cysteine 188 and cysteine 227-cysteine 283. The segment at glutamate 207 to tryptophan 298 is alpha-3. Positions proline 209–arginine 297 constitute an Ig-like C1-type domain. Residues glutamate 299 to isoleucine 308 form a connecting peptide region. Residues valine 309 to cysteine 333 traverse the membrane as a helical segment. Residues arginine 334–alanine 366 lie on the Cytoplasmic side of the membrane.

Belongs to the MHC class I family. In terms of assembly, heterodimer of an alpha chain and a beta chain (beta-2-microglobulin).

It is found in the membrane. In terms of biological role, involved in the presentation of foreign antigens to the immune system. The sequence is that of Class I histocompatibility antigen, Gogo-C*0201 alpha chain from Gorilla gorilla gorilla (Western lowland gorilla).